The primary structure comprises 343 residues: Dihydroorotate dehydrogenase (quinone) (343 aa).

Residues 61–65 (AGLDK) and T85 each bind FMN. K65 is a binding site for substrate. Residue 110–114 (NRMGF) participates in substrate binding. N138 and N171 together coordinate FMN. N171 is a binding site for substrate. The active-site Nucleophile is S174. N176 provides a ligand contact to substrate. 2 residues coordinate FMN: K216 and T244. 245–246 (NT) lines the substrate pocket. Residues G267, G296, and 317–318 (YS) contribute to the FMN site.

Belongs to the dihydroorotate dehydrogenase family. Type 2 subfamily. Monomer. Requires FMN as cofactor.

It is found in the cell membrane. The enzyme catalyses (S)-dihydroorotate + a quinone = orotate + a quinol. It participates in pyrimidine metabolism; UMP biosynthesis via de novo pathway; orotate from (S)-dihydroorotate (quinone route): step 1/1. Catalyzes the conversion of dihydroorotate to orotate with quinone as electron acceptor. This is Dihydroorotate dehydrogenase (quinone) from Pseudomonas savastanoi pv. phaseolicola (strain 1448A / Race 6) (Pseudomonas syringae pv. phaseolicola (strain 1448A / Race 6)).